The primary structure comprises 93 residues: Co-chaperonin GroES (93 aa).

It belongs to the GroES chaperonin family. Heptamer of 7 subunits arranged in a ring. Interacts with the chaperonin GroEL.

Its subcellular location is the cytoplasm. Its function is as follows. Together with the chaperonin GroEL, plays an essential role in assisting protein folding. The GroEL-GroES system forms a nano-cage that allows encapsulation of the non-native substrate proteins and provides a physical environment optimized to promote and accelerate protein folding. GroES binds to the apical surface of the GroEL ring, thereby capping the opening of the GroEL channel. The protein is Co-chaperonin GroES of Lacticaseibacillus paracasei (strain ATCC 334 / BCRC 17002 / CCUG 31169 / CIP 107868 / KCTC 3260 / NRRL B-441) (Lactobacillus paracasei).